The chain runs to 95 residues: Co-chaperonin GroES (95 aa).

Belongs to the GroES chaperonin family. In terms of assembly, heptamer of 7 subunits arranged in a ring. Interacts with the chaperonin GroEL.

The protein localises to the cytoplasm. In terms of biological role, together with the chaperonin GroEL, plays an essential role in assisting protein folding. The GroEL-GroES system forms a nano-cage that allows encapsulation of the non-native substrate proteins and provides a physical environment optimized to promote and accelerate protein folding. GroES binds to the apical surface of the GroEL ring, thereby capping the opening of the GroEL channel. The polypeptide is Co-chaperonin GroES (Xylella fastidiosa (strain M23)).